The chain runs to 2896 residues: Protein PRRC2C (2896 aa).

Residue Lys-27 is modified to N6-acetyllysine. Positions Gly-28 to Asp-212 are disordered. Basic and acidic residues predominate over residues Gln-88 to Pro-97. Residues Lys-105 to Lys-119 are compositionally biased toward low complexity. Positions Gln-134–Pro-144 are enriched in polar residues. Positions Asp-151–Asn-160 are enriched in basic and acidic residues. A phosphoserine mark is found at Ser-187 and Ser-191. Residues Asp-201 to Asn-211 are compositionally biased toward polar residues. Arg-242 is subject to Asymmetric dimethylarginine; alternate. Position 242 is an omega-N-methylarginine; alternate (Arg-242). Arg-255 and Arg-266 each carry asymmetric dimethylarginine. 2 disordered regions span residues Pro-264–Ala-729 and Ser-750–His-788. 2 positions are modified to omega-N-methylarginine: Arg-279 and Arg-281. The segment covering Glu-301 to Asn-310 has biased composition (basic and acidic residues). Ser-335 is subject to Phosphoserine. Residues Gly-341–Ser-358 are compositionally biased toward polar residues. The segment covering Glu-359–Asp-368 has biased composition (basic and acidic residues). Residues Val-370–Ala-381 show a composition bias toward polar residues. Lys-392 bears the N6-acetyllysine mark. 2 positions are modified to phosphoserine: Ser-395 and Ser-500. The segment covering Ser-395 to His-405 has biased composition (polar residues). Residues Arg-465–Glu-648 show a composition bias toward basic and acidic residues. Over residues Gln-676–Thr-708 the composition is skewed to low complexity. The span at Pro-759–Pro-769 shows a compositional bias: pro residues. Ser-779, Ser-785, and Ser-801 each carry phosphoserine. Positions Arg-804–Ala-1118 are disordered. Composition is skewed to basic and acidic residues over residues Ala-825–Ala-836, Asn-852–Ser-867, and Ser-878–Asp-888. Residues Ser-867, Ser-878, Ser-920, and Ser-929 each carry the phosphoserine modification. Basic and acidic residues-rich tracts occupy residues Ile-954 to Trp-993, Asn-1000 to Val-1010, and Val-1020 to Leu-1058. Residues Val-1020–Val-1046 are a coiled coil. Positions Pro-1059 to Gln-1081 are enriched in pro residues. Residues Ser-1089 to Ser-1100 show a composition bias toward polar residues. Lys-1133 is covalently cross-linked (Glycyl lysine isopeptide (Lys-Gly) (interchain with G-Cter in SUMO2)). Basic and acidic residues-rich tracts occupy residues Ser-1143–Ser-1163, Tyr-1170–Phe-1180, His-1214–His-1230, and Arg-1237–Ser-1248. Disordered stretches follow at residues Ser-1143–Ser-1647, Glu-1670–Val-1785, Ala-1905–Leu-1991, Ile-2005–Met-2164, Leu-2218–Ser-2238, Trp-2257–Thr-2290, Gly-2317–Lys-2341, and Asp-2668–Lys-2701. 5 positions are modified to phosphoserine: Ser-1242, Ser-1246, Ser-1248, Ser-1249, and Ser-1263. Composition is skewed to basic and acidic residues over residues Arg-1261 to Lys-1297, Phe-1305 to Lys-1330, Glu-1381 to Glu-1418, and Pro-1429 to Ala-1446. Thr-1265 and Thr-1267 each carry phosphothreonine. Composition is skewed to polar residues over residues Thr-1457 to Val-1469 and Gly-1477 to Gln-1491. The span at Phe-1505 to Ala-1517 shows a compositional bias: basic and acidic residues. Ser-1544 bears the Phosphoserine mark. Basic and acidic residues-rich tracts occupy residues Asn-1620–Pro-1634 and Arg-1692–Gln-1704. Residues Thr-1682–Lys-1717 adopt a coiled-coil conformation. Positions Ser-1742–Val-1785 are enriched in low complexity. The segment covering Ala-1913 to Pro-1929 has biased composition (pro residues). Residues Pro-1943–Lys-1952 show a composition bias toward low complexity. Thr-1965 is modified (phosphothreonine). Positions Lys-1976–Thr-1986 are enriched in polar residues. A phosphoserine mark is found at Ser-1983 and Ser-2013. A compositionally biased stretch (polar residues) spans Ser-2019–Ser-2035. The segment covering Lys-2075–Gln-2088 has biased composition (basic and acidic residues). Position 2105 is a phosphoserine (Ser-2105). The span at Glu-2108–Gln-2132 shows a compositional bias: basic and acidic residues. Position 2143 is a phosphoserine (Ser-2143). Over residues Trp-2257–Gly-2267 the composition is skewed to basic and acidic residues. Ser-2260 is subject to Phosphoserine. Residues Pro-2269–Thr-2290 are compositionally biased toward polar residues. Over residues Thr-2320–Ser-2334 the composition is skewed to low complexity. Thr-2673 and Thr-2682 each carry phosphothreonine. Residues Arg-2679 to Lys-2701 show a composition bias toward polar residues. Ser-2686 and Ser-2694 each carry phosphoserine. Arg-2814 carries the post-translational modification Omega-N-methylarginine. At Arg-2823 the chain carries Asymmetric dimethylarginine; alternate. Arg-2823 is subject to Omega-N-methylarginine; alternate. Positions Phe-2824–Gln-2833 are enriched in polar residues. The segment at Phe-2824 to Ser-2896 is disordered.

Overexpressed in bladder cancer.

It is found in the cytoplasm. The protein resides in the stress granule. Functionally, required for efficient formation of stress granules. In Homo sapiens (Human), this protein is Protein PRRC2C.